A 124-amino-acid chain; its full sequence is Small ribosomal subunit protein uS13 (124 aa).

Residues 96–124 (LPVRGQRTKTNARTRKGPRRTVAGKKKAK) are disordered.

It belongs to the universal ribosomal protein uS13 family. Part of the 30S ribosomal subunit. Forms a loose heterodimer with protein S19. Forms two bridges to the 50S subunit in the 70S ribosome.

Located at the top of the head of the 30S subunit, it contacts several helices of the 16S rRNA. In the 70S ribosome it contacts the 23S rRNA (bridge B1a) and protein L5 of the 50S subunit (bridge B1b), connecting the 2 subunits; these bridges are implicated in subunit movement. Contacts the tRNAs in the A and P-sites. This Symbiobacterium thermophilum (strain DSM 24528 / JCM 14929 / IAM 14863 / T) protein is Small ribosomal subunit protein uS13.